The following is a 380-amino-acid chain: Cytochrome b (380 aa).

The next 4 helical transmembrane spans lie at 34–54, 78–99, 114–134, and 179–199; these read FGSLLGICLLTQIMTGLLLAT, WLIRNLHANGASFFFICIYLHI, WNTGIILLLTLMATAFVGYVL, and FFALHFLLPFLIAGLTLIHLT. 2 residues coordinate heme b: His-84 and His-98. The heme b site is built by His-183 and His-197. A ubiquinone is bound at residue His-202. 4 helical membrane passes run 227–247, 289–309, 321–341, and 348–368; these read LKDILGFMLMLLPLTTLALFS, LGGVLALAASVLILFLIPFLH, ISQLLFWTLVANLLILTWIGS, and FIIIGQLASLTYFLILLALFP.

The protein belongs to the cytochrome b family. In terms of assembly, the cytochrome bc1 complex contains 11 subunits: 3 respiratory subunits (MT-CYB, CYC1 and UQCRFS1), 2 core proteins (UQCRC1 and UQCRC2) and 6 low-molecular weight proteins (UQCRH/QCR6, UQCRB/QCR7, UQCRQ/QCR8, UQCR10/QCR9, UQCR11/QCR10 and a cleavage product of UQCRFS1). This cytochrome bc1 complex then forms a dimer. Heme b is required as a cofactor.

It is found in the mitochondrion inner membrane. In terms of biological role, component of the ubiquinol-cytochrome c reductase complex (complex III or cytochrome b-c1 complex) that is part of the mitochondrial respiratory chain. The b-c1 complex mediates electron transfer from ubiquinol to cytochrome c. Contributes to the generation of a proton gradient across the mitochondrial membrane that is then used for ATP synthesis. This is Cytochrome b (MT-CYB) from Buteo buteo (Eurasian buzzard).